Reading from the N-terminus, the 515-residue chain is Histidine ammonia-lyase (515 aa).

Residues alanine 145–glycine 147 constitute a cross-link (5-imidazolinone (Ala-Gly)). Serine 146 is subject to 2,3-didehydroalanine (Ser).

It belongs to the PAL/histidase family. Post-translationally, contains an active site 4-methylidene-imidazol-5-one (MIO), which is formed autocatalytically by cyclization and dehydration of residues Ala-Ser-Gly.

Its subcellular location is the cytoplasm. The enzyme catalyses L-histidine = trans-urocanate + NH4(+). The protein operates within amino-acid degradation; L-histidine degradation into L-glutamate; N-formimidoyl-L-glutamate from L-histidine: step 1/3. This chain is Histidine ammonia-lyase, found in Gluconacetobacter diazotrophicus (strain ATCC 49037 / DSM 5601 / CCUG 37298 / CIP 103539 / LMG 7603 / PAl5).